Here is a 370-residue protein sequence, read N- to C-terminus: Glutathione S-transferase omega-like 2 (370 aa).

Arginine 15 is a binding site for glutathione. Cysteine 46 functions as the Nucleophile in the catalytic mechanism. Residues tryptophan 79, arginine 155, valine 158, glutamate 173, and serine 174 each coordinate glutathione. In terms of domain architecture, GST C-terminal spans 201–353 (PAQLKTQIDD…LHYTRSHTRI (153 aa)).

The protein belongs to the GST superfamily. Omega family. In terms of assembly, homodimer.

It is found in the cytoplasm. The enzyme catalyses RX + glutathione = an S-substituted glutathione + a halide anion + H(+). The catalysed reaction is L-dehydroascorbate + 2 glutathione = glutathione disulfide + L-ascorbate. Its function is as follows. Active as '1-Cys' thiol transferase against beta-hydroxyethyl disulfide (HED), as dehydroascorbate reductase and as dimethylarsinic acid reductase, while not active against the standard GST substrate 1-chloro-2,4-dinitrobenzene (CDNB). May be involved in cell wall organization and biogenesis. The chain is Glutathione S-transferase omega-like 2 from Saccharomyces cerevisiae (strain ATCC 204508 / S288c) (Baker's yeast).